The following is a 435-amino-acid chain: Serine--tRNA ligase (435 aa).

238-240 (TAE) lines the L-serine pocket. Residue 269–271 (RKE) participates in ATP binding. Glu-292 contacts L-serine. ATP is bound at residue 356–359 (EISS). L-serine is bound at residue Ser-391.

This sequence belongs to the class-II aminoacyl-tRNA synthetase family. Type-1 seryl-tRNA synthetase subfamily. In terms of assembly, homodimer. The tRNA molecule binds across the dimer.

Its subcellular location is the cytoplasm. The catalysed reaction is tRNA(Ser) + L-serine + ATP = L-seryl-tRNA(Ser) + AMP + diphosphate + H(+). It carries out the reaction tRNA(Sec) + L-serine + ATP = L-seryl-tRNA(Sec) + AMP + diphosphate + H(+). It participates in aminoacyl-tRNA biosynthesis; selenocysteinyl-tRNA(Sec) biosynthesis; L-seryl-tRNA(Sec) from L-serine and tRNA(Sec): step 1/1. Its function is as follows. Catalyzes the attachment of serine to tRNA(Ser). Is also able to aminoacylate tRNA(Sec) with serine, to form the misacylated tRNA L-seryl-tRNA(Sec), which will be further converted into selenocysteinyl-tRNA(Sec). The protein is Serine--tRNA ligase of Leuconostoc mesenteroides subsp. mesenteroides (strain ATCC 8293 / DSM 20343 / BCRC 11652 / CCM 1803 / JCM 6124 / NCDO 523 / NBRC 100496 / NCIMB 8023 / NCTC 12954 / NRRL B-1118 / 37Y).